A 115-amino-acid polypeptide reads, in one-letter code: Nucleoid-associated protein LA_4332 (115 aa).

Belongs to the YbaB/EbfC family. In terms of assembly, homodimer.

The protein localises to the cytoplasm. The protein resides in the nucleoid. Its function is as follows. Binds to DNA and alters its conformation. May be involved in regulation of gene expression, nucleoid organization and DNA protection. The chain is Nucleoid-associated protein LA_4332 from Leptospira interrogans serogroup Icterohaemorrhagiae serovar Lai (strain 56601).